A 456-amino-acid polypeptide reads, in one-letter code: Acyl-CoA transferase FPSE_08120 (456 aa).

A mitochondrion-targeting transit peptide spans 1-33 (MARLLFSGQRLRPSFLRSYIRANPSSTPSATRA).

This sequence belongs to the CoA-transferase III family.

It localises to the mitochondrion. Acyl-CoA transferase; part of the Fusarium detoxification of benzoxazolinone cluster involved in the degradation of benzoxazolinones produced by the host plant. Maize, wheat, and rye produce the 2 benzoxazinone phytoanticipins 2,4-dihy-droxy-7-methoxy-1,4-benzoxazin-3-one (DIMBOA) and 2,4-dihydroxy-1,4-benzoxazin-3-one (DIBOA) that, due to their inherent instability once released, spontaneously degrade to the more stable corresponding benzoxazolinones, 6-methoxy-2-benzoxazolinone (MBOA) and 2-benzoxazolinone (BOA), respectively. The first step in the detoxification of benzoxazolinones involves the hydrolysis of the cyclic ester bond of benzoxazolinones by the gamma-lactamase FDB1 to aminophenols. FDB1 is able to convert 2-benzoxazolinone (BOA) into 2-aminophenol (2-AP), as well as 6-methoxy-2-benzoxazolinone (MBOA) into 5-methoxy-2-aminophenol (2-AMP). The N-malonyltransferase FDB2 then metabolizes aminophenols via N-malonylation to non-toxic malonamic acids. FDB2 converts 2-AP into N-(2-hydroxyphenyl) malonamic acid (HPMA) and 2-AMP into N-(2-hydroxy-4-methoxyphenyl) malonamic acid (HMPMA). The cluster also contains 2 transcription factors (FDB3 and FPSE_08121), an aldo-keto reductase (FPSE_08125) that possibly associates with a ketone component of BOA and MBOA degradation, an esterase (FPSE_08126), an acyl-CoA transferase (FPSE_08120), a solute carrier protein (FPSE_08119) and a transmembrane transporter (FPSE_08127) proposed to shuttle metabolites of benzoxazolinone degradation. This is Acyl-CoA transferase FPSE_08120 from Fusarium pseudograminearum (strain CS3096) (Wheat and barley crown-rot fungus).